We begin with the raw amino-acid sequence, 270 residues long: Monocyte to macrophage differentiation factor 2 (270 aa).

Residues 1-38 (MFAPRLLDFQKTKYARFMNHRVPAHKRYQPTEYEHAAN) are Cytoplasmic-facing. The chain crosses the membrane as a helical span at residues 39–59 (CATHAFWIIPSILGSSNLYFL). Topologically, residues 60 to 65 (SDDDWE) are lumenal. The helical transmembrane segment at 66–86 (TISAWIYGLGLCGLFVVSTVF) threads the bilayer. At 87–102 (HTISWKKSHLRMVEHC) the chain is on the cytoplasmic side. Residues 103–123 (LHMFDRMVIYFFIAASYAPWL) traverse the membrane as a helical segment. Topologically, residues 124-132 (NLRELGPWA) are lumenal. The helical transmembrane segment at 133-153 (SHMRWLVWIMASVGTIYVFFF) threads the bilayer. Over 154-182 (HERTGSCVQFLRGEACPKAGTACLPARYK) the chain is Cytoplasmic. A helical transmembrane segment spans residues 183-203 (LVELLCYVVMGFFPALVILSM). Topologically, residues 204–205 (PN) are lumenal. Residues 206–226 (TEGIWELVTGGVFYCLGMVFF) traverse the membrane as a helical segment. The Cytoplasmic portion of the chain corresponds to 227–233 (KSDGRIP). Residues 234–254 (FAHAIWHLFVAFGAGTHYYAI) traverse the membrane as a helical segment. The Lumenal portion of the chain corresponds to 255–270 (WRYLYLPSTLQTKVSK).

The protein belongs to the ADIPOR family. In terms of tissue distribution, shows restricted expression with highest levels in brain and testis.

It localises to the golgi apparatus membrane. The polypeptide is Monocyte to macrophage differentiation factor 2 (Homo sapiens (Human)).